The sequence spans 204 residues: Urease accessory protein UreG (204 aa).

12–19 (GPVGSGKT) contacts GTP.

The protein belongs to the SIMIBI class G3E GTPase family. UreG subfamily. Homodimer. UreD, UreF and UreG form a complex that acts as a GTP-hydrolysis-dependent molecular chaperone, activating the urease apoprotein by helping to assemble the nickel containing metallocenter of UreC. The UreE protein probably delivers the nickel.

It is found in the cytoplasm. Facilitates the functional incorporation of the urease nickel metallocenter. This process requires GTP hydrolysis, probably effectuated by UreG. This chain is Urease accessory protein UreG, found in Hahella chejuensis (strain KCTC 2396).